The following is a 183-amino-acid chain: Protein FAM180B (183 aa).

The first 23 residues, 1–23 (MAATLQFLVCLVVAICLLSGVTT), serve as a signal peptide directing secretion.

This sequence belongs to the FAM180 family.

Its subcellular location is the secreted. The protein is Protein FAM180B (FAM180B) of Homo sapiens (Human).